Reading from the N-terminus, the 568-residue chain is Phosphoprotein (568 aa).

The tract at residues 1-24 (MDQDAFFFERDPEAEGEAPRKQES) is disordered. Basic and acidic residues predominate over residues 7–24 (FFERDPEAEGEAPRKQES). Residues 33–41 (DVVLSYKPT) form an N0 binding region. The segment at 45 to 324 (EDRSWLHGII…ANEEETSNTS (280 aa)) is disordered. Basic and acidic residues-rich tracts occupy residues 56 to 105 (NPKE…HARI), 132 to 144 (RNTRIDEDSPNER), and 151 to 167 (LTDEDRKMAEDSNKREE). Polar residues predominate over residues 190–208 (RTNNNGRSMETSSTHSTRI). Residues 239 to 253 (TRSERTQNSELHKST) show a composition bias toward basic and acidic residues. The segment covering 294 to 305 (YTMNNANNNTKS) has biased composition (polar residues). Residues 344–411 (FELSRSASHV…SSRDLHKRFS (68 aa)) form a multimerization region. The stretch at 387–416 (EENRTLLKQIQEEINSSRDLHKRFSEYQKE) forms a coiled coil. Residues 412–445 (EYQKEQNSLMMANLSTLHIITDRGGKTGDPSDTT) are l protein binding. Positions 434-455 (RGGKTGDPSDTTRSPSVFTKGK) are disordered. The segment covering 441–450 (PSDTTRSPSV) has biased composition (polar residues). The segment at 479-568 (DLIREDELRD…FEEDIDSLTN (90 aa)) is interaction with the nucleocapsid (N-RNA).

Belongs to the respirovirus P protein family. As to quaternary structure, homotetramer. Interacts (via multimerization domain) with polymerase L; this interaction forms the polymerase complex. Interacts (via N-terminus) with N0; this interaction allows P to chaperon N0 before encapsidation and form the N-P complex. Interacts (via C-terminus) with N-RNA template; this interaction positions the polymerase on the template.

Functionally, essential cofactor of the RNA polymerase L that plays a central role in the transcription and replication by forming the polymerase complex with RNA polymerase L and recruiting L to the genomic N-RNA template for RNA synthesis. Also plays a central role in the encapsidation of nascent RNA chains by forming the encapsidation complex with the nucleocapsid protein N (N-P complex). Acts as a chaperone for newly synthesized free N protein, so-called N0, allowing encapsidation of nascent RNA chains during replication. The nucleoprotein protein N prevents excessive phosphorylation of P, which leads to down-regulation of viral transcription/ replication. Participates, together with N, in the formation of viral factories (viroplasms), which are large inclusions in the host cytoplasm where replication takes place. Recruits host PI4KB and remodel the host endoplasmic reticulum membrane to form viral replication factories. The sequence is that of Phosphoprotein (P/C) from Human parainfluenza 1 virus (strain C35) (HPIV-1).